The chain runs to 458 residues: E3 ubiquitin-protein ligase RNF25 (458 aa).

The RWD domain occupies 18–128 (SEVEVLESIY…EKGKEILTDN (111 aa)). Zn(2+)-binding residues include C135, C138, C153, H155, C161, C197, and C200. An RING-type zinc finger spans residues 135-201 (CVICLYGFQE…AVGVQCPVCR (67 aa)). Disordered stretches follow at residues 267–299 (PPAP…TSAT) and 317–458 (KTPG…EDGS). Composition is skewed to polar residues over residues 282–299 (GSHQ…TSAT) and 362–372 (LKGTSDTQKLQ). Composition is skewed to basic and acidic residues over residues 377–388 (PLKESMDLKPES) and 412–423 (RTRDCAHWERAK). Positions 432 to 443 (PRLPRGRGAYRP) are enriched in low complexity.

This sequence belongs to the RNF25 family. In terms of assembly, interacts with UBE2D2, and may also interact with UBE2E1 and UBE2E3. Interacts with RELA/p65. Post-translationally, ubiquitinated; autoubiquitinated.

The protein resides in the cytoplasm. It carries out the reaction S-ubiquitinyl-[E2 ubiquitin-conjugating enzyme]-L-cysteine + [acceptor protein]-L-lysine = [E2 ubiquitin-conjugating enzyme]-L-cysteine + N(6)-ubiquitinyl-[acceptor protein]-L-lysine.. It functions in the pathway protein modification; protein ubiquitination. In terms of biological role, E3 ubiquitin-protein ligase that plays a key role in the RNF14-RNF25 translation quality control pathway, a pathway that takes place when a ribosome has stalled during translation, and which promotes ubiquitination and degradation of translation factors on stalled ribosomes. Catalyzes ubiquitination of RPS27A in response to ribosome collisions, promoting activation of RNF14. RNF25 catalyzes ubiquitination of other ribosomal proteins on stalled ribosomes, such as RPL0, RPL1, RPL12, RPS13 and RPS17. Also involved in ubiquitination and degradation of stalled ETF1/eRF1. Independently of its function in the response to stalled ribosomes, mediates ubiquitination and subsequent proteasomal degradation of NKD2. May also stimulate transcription mediated by NF-kappa-B via its interaction with RELA/p65. The chain is E3 ubiquitin-protein ligase RNF25 (RNF25) from Bos taurus (Bovine).